The chain runs to 318 residues: Ubiquitin-conjugating enzyme E2 J1 (318 aa).

Topologically, residues 1–282 (METRYNLKSP…QGQPPRAHHT (282 aa)) are cytoplasmic. The 159-residue stretch at 10–168 (PAVKRLMKEA…VLLPLKSGSG (159 aa)) folds into the UBC core domain. The active-site Glycyl thioester intermediate is the cysteine 91. Position 184 is a phosphoserine (serine 184). Polar residues predominate over residues 215–233 (PTTFQGATASTSYGAQNPS). Residues 215–283 (PTTFQGATAS…GQPPRAHHTE (69 aa)) are disordered. Positions 249–269 (SMSPRQRRAQQQSQRRPSTSP) are enriched in low complexity. Phosphoserine occurs at positions 266 and 268. Residues 283–303 (EHGGSAMLIIILTLALAALIF) form a helical; Anchor for type IV membrane protein membrane-spanning segment. Residues 304–318 (RRIYLANEYIFDFEL) are Lumenal-facing.

The protein belongs to the ubiquitin-conjugating enzyme family. In terms of assembly, component of the HRD1 complex, which comprises at least SYNV1/HRD1, DERL1/2, FAM8A1, HERPUD1/HERP, OS9, SEL1L and UBE2J1. Interacts with E3 ligase RNF26. Interacts with E3 ligase RNF133. Post-translationally, phosphorylated at Ser-184 in a cytosolic stress-dependent manner by MAP kinase p38 MAPKAPK2. In terms of processing, phosphorylated UBE2J1 is rapidly ubiquitinated and subsequently degraded by the proteasome.

Its subcellular location is the endoplasmic reticulum membrane. The enzyme catalyses S-ubiquitinyl-[E1 ubiquitin-activating enzyme]-L-cysteine + [E2 ubiquitin-conjugating enzyme]-L-cysteine = [E1 ubiquitin-activating enzyme]-L-cysteine + S-ubiquitinyl-[E2 ubiquitin-conjugating enzyme]-L-cysteine.. Its pathway is protein modification; protein ubiquitination. In terms of biological role, catalyzes the covalent attachment of ubiquitin to other proteins. Functions in the selective degradation of misfolded membrane proteins from the endoplasmic reticulum (ERAD) and is essential for cells to recover from ER stress. Plays a role in MAPKAPK2-dependent translational control of TNF-alpha synthesis. Also acts as a platform for perinuclear positioning of the endosomal system by mediating ubiquitination of SQSTM1 through interaction with the E3 ubiquitin-protein ligase RNF26. Plays a role in male fecundity through the interaction with the E3 ubiquitin-protein ligase RNF133. This is Ubiquitin-conjugating enzyme E2 J1 (Ube2j1) from Mus musculus (Mouse).